A 506-amino-acid polypeptide reads, in one-letter code: Transforming growth factor beta-1-induced transcript 1 protein (506 aa).

The LD motif 1 signature appears at aspartate 3 to threonine 15. Residues threonine 15–lysine 62 are disordered. Positions threonine 52–lysine 62 are enriched in basic and acidic residues. 2 consecutive short sequence motifs (LD motif) follow at residues glutamate 87–glutamine 99 and glutamate 139–phenylalanine 150. Disordered stretches follow at residues asparagine 154–lysine 201 and serine 221–valine 244. Residues glycine 168–aspartate 177 are compositionally biased toward basic and acidic residues. Residues aspartate 248–leucine 260 carry the LD motif 4 motif. LIM zinc-binding domains follow at residues glycine 271–proline 330, arginine 331–glycine 388, alanine 389–serine 448, and leucine 449–glycine 506.

Belongs to the paxillin family. In terms of assembly, interacts with tcf3 and tcf7l2.

The protein resides in the cell junction. It localises to the focal adhesion. It is found in the nucleus matrix. Its subcellular location is the cytoplasm. The protein localises to the cytoskeleton. In terms of biological role, functions as a molecular adapter coordinating multiple protein-protein interactions at the focal adhesion complex and in the nucleus. May regulate both Wnt and steroid signaling pathways and play a role in the processes of cell growth, proliferation, migration, differentiation and senescence. May have a zinc-dependent DNA-binding activity. This Xenopus laevis (African clawed frog) protein is Transforming growth factor beta-1-induced transcript 1 protein (tgfb1i1).